Here is a 1462-residue protein sequence, read N- to C-terminus: NK-tumor recognition protein (1462 aa).

In terms of domain architecture, PPIase cyclophilin-type spans 10–175 (HFDIEINREP…ADVRVIDCGV (166 aa)). 2 disordered regions span residues 187–591 (KKRK…TMAQ) and 607–627 (VIPLSDSPPPSRWKPGQKPWK). Positions 198–213 (SDSSSNSSSSSESSSE) are enriched in low complexity. The span at 221–240 (SRRRKHKRRPKVKRSKKRRK) shows a compositional bias: basic residues. Composition is skewed to basic and acidic residues over residues 241–250 (EASSSEEPRN) and 258–286 (GHSERSDTNEKRSVDSSAKREKPVVRPEE). Residue Lys323 forms a Glycyl lysine isopeptide (Lys-Gly) (interchain with G-Cter in SUMO2) linkage. Residues 329–345 (SGRKIKGRGTIRYHTPP) are compositionally biased toward basic residues. Ser379, Ser401, and Ser416 each carry phosphoserine. Positions 382–402 (KWSKGDKLSDPCSSRWDERSL) are enriched in basic and acidic residues. Residues 403–421 (SQRSRSWSYNGYYSDLSTA) are compositionally biased toward polar residues. The segment covering 423-459 (HSGHHKKRRKEKKVKHKKKGKKQKHCRRHKQTKKRRI) has biased composition (basic residues). Ser463 and Ser471 each carry phosphoserine. Basic and acidic residues predominate over residues 497 to 507 (KRDWSKSDKDV). Over residues 524-542 (HSQSYSRGSSRSRTASKSS) the composition is skewed to low complexity. The span at 543–568 (SHSRSRSKSRSSSKSGHRKRASKSPR) shows a compositional bias: basic residues. Glycyl lysine isopeptide (Lys-Gly) (interchain with G-Cter in SUMO2) cross-links involve residues Lys578 and Lys581. The residue at position 613 (Ser613) is a Phosphoserine. Residue Lys639 forms a Glycyl lysine isopeptide (Lys-Gly) (interchain with G-Cter in SUMO2) linkage. Position 648 is a phosphoserine (Ser648). Glycyl lysine isopeptide (Lys-Gly) (interchain with G-Cter in SUMO2) cross-links involve residues Lys656 and Lys666. A disordered region spans residues 658-1072 (TGSSSSYHKR…EEDLSGKHDT (415 aa)). Low complexity-rich tracts occupy residues 699–725 (SRSYSRSYTRSRSLASSHSRSRSPSSR) and 736–749 (SQCSRSSSYTSISS). A compositionally biased stretch (basic residues) spans 754-774 (RAKRRLRSSGKKNSVSHKKHS). The segment covering 775-800 (SSSEKTLHSKYVKGRDRSSCVRKYSE) has biased composition (basic and acidic residues). Residues 801–815 (SRSSLDYSSDSEQSS) show a composition bias toward low complexity. Basic and acidic residues-rich tracts occupy residues 823-870 (QEKE…DHLR) and 885-909 (WDSESNSERDVTKNSKNDSHPSSDK). Phosphoserine occurs at positions 866, 887, 889, 891, and 907. Acidic residues predominate over residues 910–922 (EEGEATSDSESEV). The span at 932–969 (TTKSSTNTSLPDDNGAWKSSKQRTSTSDSEGSCSNSEN) shows a compositional bias: polar residues. The segment covering 988–1013 (EHTKKVKEKLKGKKDKKHKAPKRKQA) has biased composition (basic residues). The span at 1022 to 1031 (FGEEEEEEID) shows a compositional bias: acidic residues. Basic and acidic residues predominate over residues 1032–1072 (DKQVTQESKEKKVSENNETIKDNILKTEKSSEEDLSGKHDT). Lys1057 participates in a covalent cross-link: Glycyl lysine isopeptide (Lys-Gly) (interchain with G-Cter in SUMO2). Ser1077 and Ser1146 each carry phosphoserine. The disordered stretch occupies residues 1129–1156 (MEICTPDRSSPAKVEETSPLGNARLDTP). Thr1155 is modified (phosphothreonine). A Glycyl lysine isopeptide (Lys-Gly) (interchain with G-Cter in SUMO2) cross-link involves residue Lys1163. The tract at residues 1169–1215 (EHPQAEVVKQESSMSESKVLGEVGKQDSSSASLASAGESTGKKEVAE) is disordered. Lys1177 participates in a covalent cross-link: Glycyl lysine isopeptide (Lys-Gly) (interchain with G-Cter in SUMO1); alternate. Lys1177 participates in a covalent cross-link: Glycyl lysine isopeptide (Lys-Gly) (interchain with G-Cter in SUMO2); alternate. Phosphoserine is present on Ser1203. Glycyl lysine isopeptide (Lys-Gly) (interchain with G-Cter in SUMO2) cross-links involve residues Lys1216, Lys1225, and Lys1258. Residues 1251-1462 (LTTVPEMKPQ…RSPSESSRYS (212 aa)) form a disordered region. Residues 1311–1348 (SRSPSRSRSKSETKSRHRTRSVSYSHSRSRSRSSTSSY) are arg/Ser tandem repeat-rich. Low complexity-rich tracts occupy residues 1331-1351 (SVSYSHSRSRSRSSTSSYRSR) and 1359-1376 (RGWYSRGRTRSRSSSYRS). Residues 1377-1388 (YKSHRTSSRSRS) show a composition bias toward basic residues. The span at 1389 to 1410 (RSSSYDPHSRSRSYTYDSYYSR) shows a compositional bias: low complexity. The segment covering 1425–1435 (RGRSYNRRSRS) has biased composition (basic residues).

The protein localises to the cell membrane. The enzyme catalyses [protein]-peptidylproline (omega=180) = [protein]-peptidylproline (omega=0). Inhibited by cyclosporin A (CsA). Its function is as follows. PPIase that catalyzes the cis-trans isomerization of proline imidic peptide bonds in oligopeptides and may therefore assist protein folding. Component of a putative tumor-recognition complex involved in the function of NK cells. In Homo sapiens (Human), this protein is NK-tumor recognition protein.